The primary structure comprises 132 residues: Small ribosomal subunit protein uS8 (132 aa).

This sequence belongs to the universal ribosomal protein uS8 family. Part of the 30S ribosomal subunit. Contacts proteins S5 and S12.

Its function is as follows. One of the primary rRNA binding proteins, it binds directly to 16S rRNA central domain where it helps coordinate assembly of the platform of the 30S subunit. The polypeptide is Small ribosomal subunit protein uS8 (Xanthomonas campestris pv. campestris (strain 8004)).